Here is a 595-residue protein sequence, read N- to C-terminus: MFS-type transporter phomT (595 aa).

Basic and acidic residues predominate over residues 1–11; the sequence is MESDGKSDRTK. The tract at residues 1 to 62 is disordered; sequence MESDGKSDRT…HVSADDGPVD (62 aa). The span at 30–48 shows a compositional bias: polar residues; it reads PGHSTDTEGNGSDNNNTQV. 2 N-linked (GlcNAc...) asparagine glycosylation sites follow: Asn-39 and Asn-44. 3 consecutive transmembrane segments (helical) span residues 91-111, 126-146, and 156-176; these read IILL…TIVA, DVGW…LFFG, and WVFL…GVAP. The N-linked (GlcNAc...) asparagine glycan is linked to Asn-177. The next 3 membrane-spanning stretches (helical) occupy residues 186–206, 217–237, and 245–265; these read AVAG…IAFS, ALIS…GGVF, and WCFY…VFFL. The N-linked (GlcNAc...) asparagine glycan is linked to Asn-277. 7 helical membrane-spanning segments follow: residues 290-310, 320-340, 362-382, 409-429, 451-471, 483-503, and 559-579; these read IGTA…QWGG, VVAL…LQFW, VFTG…PIWF, IVGG…YALP, WIGY…QGIV, AIGT…FVSV, and VIWT…AVIF.

Belongs to the major facilitator superfamily. TCR/Tet family.

It localises to the cell membrane. MFS-type transporter; part of the gene cluster that mediates the biosynthesis of the phomopsins, a group of hexapeptide mycotoxins which infects lupins and causes lupinosis disease in livestock. PhomT is likely to be involved in the cellular export of phomopsins. The protein is MFS-type transporter phomT of Diaporthe leptostromiformis (Lupinosis disease fungus).